Here is a 360-residue protein sequence, read N- to C-terminus: Sensor histidine kinase LiaS (360 aa).

Residues 1 to 15 (MRKKMLASLQWRAIR) are Cytoplasmic-facing. A helical transmembrane segment spans residues 16–36 (MTTGISLLLFVCLISFMMFYY). Residues 37-47 (RLDPLVLLSSS) lie on the Extracellular side of the membrane. A helical transmembrane segment spans residues 48–68 (WFGIPFILILLLISVTVGFAS). At 69–360 (GYMYGNRLKT…ENERDSSIID (292 aa)) the chain is on the cytoplasmic side. One can recognise an HAMP domain in the interval 74–126 (NRLKTRIDTLIESILTFENGNFAYRIPPLGDDEIGLAADQLNEMAKRVELQVA). The 194-residue stretch at 153-346 (RLARDLHDAV…QIEVKVPIFP (194 aa)) folds into the Histidine kinase domain. Histidine 159 carries the post-translational modification Phosphohistidine; by autocatalysis.

It localises to the cell membrane. The enzyme catalyses ATP + protein L-histidine = ADP + protein N-phospho-L-histidine.. Its function is as follows. Member of the two-component regulatory system LiaS/LiaR probably involved in response to a subset of cell wall-active antibiotics that interfere with the lipid II cycle in the cytoplasmic membrane (bacitracin, nisin, ramoplanin and vancomycin). Also seems to be involved in response to cationic antimicrobial peptides and secretion stress. Activates probably LiaR by phosphorylation. The polypeptide is Sensor histidine kinase LiaS (liaS) (Bacillus subtilis (strain 168)).